The sequence spans 565 residues: uncharacterized protein (565 aa).

Positions 1 to 19 (MRWLATFVALLIAISSVSA) are cleaved as a signal peptide. The segment covering 494–504 (TGAENVTNNSV) has biased composition (polar residues). The interval 494 to 525 (TGAENVTNNSVTATTPPAKASQQTPAPATPPV) is disordered. Low complexity predominate over residues 505–519 (TATTPPAKASQQTPA).

This is an uncharacterized protein from Archaeoglobus fulgidus (strain ATCC 49558 / DSM 4304 / JCM 9628 / NBRC 100126 / VC-16).